Consider the following 242-residue polypeptide: 1-(5-phosphoribosyl)-5-[(5-phosphoribosylamino)methylideneamino] imidazole-4-carboxamide isomerase (242 aa).

The Proton acceptor role is filled by D8. D129 acts as the Proton donor in catalysis.

The protein belongs to the HisA/HisF family.

It is found in the cytoplasm. It catalyses the reaction 1-(5-phospho-beta-D-ribosyl)-5-[(5-phospho-beta-D-ribosylamino)methylideneamino]imidazole-4-carboxamide = 5-[(5-phospho-1-deoxy-D-ribulos-1-ylimino)methylamino]-1-(5-phospho-beta-D-ribosyl)imidazole-4-carboxamide. It participates in amino-acid biosynthesis; L-histidine biosynthesis; L-histidine from 5-phospho-alpha-D-ribose 1-diphosphate: step 4/9. This Dictyoglomus turgidum (strain DSM 6724 / Z-1310) protein is 1-(5-phosphoribosyl)-5-[(5-phosphoribosylamino)methylideneamino] imidazole-4-carboxamide isomerase.